Here is a 274-residue protein sequence, read N- to C-terminus: NH(3)-dependent NAD(+) synthetase (274 aa).

27–34 (GLSGGIDS) is an ATP binding site. A Mg(2+)-binding site is contributed by aspartate 33. Deamido-NAD(+) is bound at residue arginine 121. An ATP-binding site is contributed by threonine 141. A Mg(2+)-binding site is contributed by glutamate 146. Residues lysine 170 and serine 192 each coordinate ATP.

The protein belongs to the NAD synthetase family. As to quaternary structure, homodimer.

It carries out the reaction deamido-NAD(+) + NH4(+) + ATP = AMP + diphosphate + NAD(+) + H(+). It functions in the pathway cofactor biosynthesis; NAD(+) biosynthesis; NAD(+) from deamido-NAD(+) (ammonia route): step 1/1. Catalyzes the ATP-dependent amidation of deamido-NAD to form NAD. Uses ammonia as a nitrogen source. The sequence is that of NH(3)-dependent NAD(+) synthetase from Helicobacter hepaticus (strain ATCC 51449 / 3B1).